A 248-amino-acid polypeptide reads, in one-letter code: 3-deoxy-manno-octulosonate cytidylyltransferase (248 aa).

Belongs to the KdsB family.

The protein localises to the cytoplasm. It carries out the reaction 3-deoxy-alpha-D-manno-oct-2-ulosonate + CTP = CMP-3-deoxy-beta-D-manno-octulosonate + diphosphate. It functions in the pathway nucleotide-sugar biosynthesis; CMP-3-deoxy-D-manno-octulosonate biosynthesis; CMP-3-deoxy-D-manno-octulosonate from 3-deoxy-D-manno-octulosonate and CTP: step 1/1. The protein operates within bacterial outer membrane biogenesis; lipopolysaccharide biosynthesis. In terms of biological role, activates KDO (a required 8-carbon sugar) for incorporation into bacterial lipopolysaccharide in Gram-negative bacteria. The chain is 3-deoxy-manno-octulosonate cytidylyltransferase from Chlorobaculum tepidum (strain ATCC 49652 / DSM 12025 / NBRC 103806 / TLS) (Chlorobium tepidum).